A 358-amino-acid chain; its full sequence is tRNA (guanine(26)-N(2))-dimethyltransferase (358 aa).

Residues 5-354 (VIRREGKAVF…ATYGEVERVL (350 aa)) enclose the Trm1 methyltransferase domain. Residues R39, R69, D87, D113, and A114 each contribute to the S-adenosyl-L-methionine site.

This sequence belongs to the class I-like SAM-binding methyltransferase superfamily. Trm1 family.

The catalysed reaction is guanosine(26) in tRNA + 2 S-adenosyl-L-methionine = N(2)-dimethylguanosine(26) in tRNA + 2 S-adenosyl-L-homocysteine + 2 H(+). Dimethylates a single guanine residue at position 26 of a number of tRNAs using S-adenosyl-L-methionine as donor of the methyl groups. The chain is tRNA (guanine(26)-N(2))-dimethyltransferase from Pyrobaculum calidifontis (strain DSM 21063 / JCM 11548 / VA1).